Here is a 250-residue protein sequence, read N- to C-terminus: ATP synthase subunit a (250 aa).

6 helical membrane passes run 29-49 (ASLF…FATS), 84-104 (FFPL…LGMV), 114-134 (IIVT…YGFI), 143-163 (LFVP…IEII), 185-205 (ITLK…ALGI), and 208-228 (AILP…VAFL).

This sequence belongs to the ATPase A chain family. In terms of assembly, F-type ATPases have 2 components, CF(1) - the catalytic core - and CF(0) - the membrane proton channel. CF(1) has five subunits: alpha(3), beta(3), gamma(1), delta(1), epsilon(1). CF(0) has three main subunits: a(1), b(2) and c(9-12). The alpha and beta chains form an alternating ring which encloses part of the gamma chain. CF(1) is attached to CF(0) by a central stalk formed by the gamma and epsilon chains, while a peripheral stalk is formed by the delta and b chains.

The protein localises to the cell inner membrane. Functionally, key component of the proton channel; it plays a direct role in the translocation of protons across the membrane. The polypeptide is ATP synthase subunit a (Rhizobium rhizogenes (strain K84 / ATCC BAA-868) (Agrobacterium radiobacter)).